A 398-amino-acid polypeptide reads, in one-letter code: MTVEYETKQLTPAQIKIILDTVPILEEAGETLTQKFYQRMIGNYDEVKPFFNTTDQKLLRQPKILAFALLNYAKNIEDLTPLTDFVKQIVVKHIGLQVLPEHYPIVGTCLIQTMVELLPPEIANKDFLEAWTIAYGNLAKLLIDLEAAEYAKQPWRWFKDFKVTRIVQECKDVKSVYFTPVDKDLLPLPKPERGQYLCFRWKLPGEEFEISREYSVSEFPKENEYRISVRHVPGGKISGYIHNNLKVGDILKVAPPAGNFVYDPATDKELIFVAGGIGITPLLSMIERALEEGKNVKLLYSNRSAETRAFGNLFKEYKSKFGDKFQAIEYFSEDNNTDDKIVIDKAFNRKLTTDDLDFIAPEHDVYLVGPREFMKDIKEHLGKKNVPVKLEYFGPYDP.

Positions 9-147 (QLTPAQIKII…LAKLLIDLEA (139 aa)) constitute a Globin domain. Position 93 (histidine 93) interacts with heme b. Catalysis depends on charge relay system residues tyrosine 103 and glutamate 146. The interval 155 to 398 (WRWFKDFKVT…KLEYFGPYDP (244 aa)) is reductase. One can recognise an FAD-binding FR-type domain in the interval 156-263 (RWFKDFKVTR…APPAGNFVYD (108 aa)). Residues tyrosine 196 and 212–215 (REYS) contribute to the FAD site. 276–281 (GIGITP) serves as a coordination point for NADP(+). An FAD-binding site is contributed by 395-398 (PYDP).

Belongs to the globin family. It depends on FAD as a cofactor. The cofactor is heme b.

It localises to the cytoplasm. The catalysed reaction is 2 nitric oxide + NADPH + 2 O2 = 2 nitrate + NADP(+) + H(+). The enzyme catalyses 2 nitric oxide + NADH + 2 O2 = 2 nitrate + NAD(+) + H(+). Its activity is regulated as follows. Inhibited by imidazoles. Its function is as follows. Nitric oxide dioxygenase involved in NO detoxification in an aerobic process, termed nitric oxide dioxygenase (NOD) reaction that utilizes O(2) and NAD(P)H to convert NO to nitrate, which protects the fungus from various noxious nitrogen compounds. Therefore, plays a central role in the inducible response to nitrosative stress. Plays a role in virulence since nitric oxide is generated by macrophages of the host immune system. This Candida albicans (strain SC5314 / ATCC MYA-2876) (Yeast) protein is Flavohemoprotein (YHB1).